The primary structure comprises 244 residues: uncharacterized protein (244 aa).

The first 17 residues, 1-17 (MVLHVITALLSIGLCYG), serve as a signal peptide directing secretion.

As to expression, component of the acid-soluble and acid-insoluble organic matrix of prismatic shell layers (at protein level).

Its subcellular location is the secreted. This is an uncharacterized protein from Haliotis asinina (Donkey's ear abalone).